A 287-amino-acid polypeptide reads, in one-letter code: Large ribosomal subunit protein uL2 (287 aa).

The disordered stretch occupies residues 216 to 287; the sequence is RRPEVRGSVM…SKRGRGGRDA (72 aa). The span at 271–287 shows a compositional bias: basic residues; the sequence is QRRRRKSSKRGRGGRDA.

Belongs to the universal ribosomal protein uL2 family. In terms of assembly, part of the 50S ribosomal subunit. Forms a bridge to the 30S subunit in the 70S ribosome.

Functionally, one of the primary rRNA binding proteins. Required for association of the 30S and 50S subunits to form the 70S ribosome, for tRNA binding and peptide bond formation. It has been suggested to have peptidyltransferase activity; this is somewhat controversial. Makes several contacts with the 16S rRNA in the 70S ribosome. The polypeptide is Large ribosomal subunit protein uL2 (Synechococcus sp. (strain ATCC 27144 / PCC 6301 / SAUG 1402/1) (Anacystis nidulans)).